The following is a 116-amino-acid chain: Regulator of ribonuclease activity B (116 aa).

The protein belongs to the RraB family. In terms of assembly, interacts with the C-terminal region of Rne.

The protein resides in the cytoplasm. Functionally, globally modulates RNA abundance by binding to RNase E (Rne) and regulating its endonucleolytic activity. Can modulate Rne action in a substrate-dependent manner by altering the composition of the degradosome. This chain is Regulator of ribonuclease activity B, found in Colwellia psychrerythraea (strain 34H / ATCC BAA-681) (Vibrio psychroerythus).